Consider the following 502-residue polypeptide: mRNA cap guanine-N(7) methyltransferase (502 aa).

The interval 1-118 (MADENPQAQG…SQQEEAMRFS (118 aa)) is disordered. Basic and acidic residues predominate over residues 93–115 (LVDRETLRRRQEERERSQQEEAM). The region spanning 146 to 502 (SKIKGLRSFN…FYHAFCFYKV (357 aa)) is the mRNA cap 0 methyltransferase domain. Position 155–156 (155–156 (NN)) interacts with mRNA. Residues lysine 159, glycine 202, aspartate 226, aspartate 264, 307–309 (MFT), and tyrosine 312 contribute to the S-adenosyl-L-methionine site. Basic and acidic residues predominate over residues 360–369 (ERETAAKKEE). Positions 360–381 (ERETAAKKEEAEPEDGEVEEDD) are disordered. A compositionally biased stretch (acidic residues) spans 370 to 381 (AEPEDGEVEEDD).

The protein belongs to the class I-like SAM-binding methyltransferase superfamily. mRNA cap 0 methyltransferase family.

The protein localises to the nucleus. It carries out the reaction a 5'-end (5'-triphosphoguanosine)-ribonucleoside in mRNA + S-adenosyl-L-methionine = a 5'-end (N(7)-methyl 5'-triphosphoguanosine)-ribonucleoside in mRNA + S-adenosyl-L-homocysteine. Functionally, responsible for methylating the 5'-cap structure of mRNAs. This Aspergillus oryzae (strain ATCC 42149 / RIB 40) (Yellow koji mold) protein is mRNA cap guanine-N(7) methyltransferase (abd1).